Consider the following 933-residue polypeptide: Melanoma-associated antigen E1 (933 aa).

4 disordered regions span residues 1–113, 149–236, 256–282, and 360–393; these read MSLV…VSAG, GASI…GINL, SDISVPPPSAEGLSTSMPPPSGEVQST, and TSGLHDLEEESSISQMPLAAEGPSASGSSIEDEN. The span at 8 to 23 shows a compositional bias: basic residues; sequence SRRRRGGRANGRKNSG. Composition is skewed to polar residues over residues 64–97, 149–166, 173–184, and 219–236; these read GGSSTSVPPTASEGSSAPGQLITSEGRNTSQLPT, GASISEQPQSHEGPNVQP, GTSVPPTFSEES, and APSTSVPPTASNGLGINL. 2 MAGE domains span residues 467 to 666 and 721 to 912; these read MEQN…YNEA and LESK…YREA. Residues 719-933 form an interaction with DTNA region; sequence SRLESKSRKL…RRPLVVRNLR (215 aa).

Interacts with DTNA. Interacts with TRIM28.

The protein localises to the cytoplasm. It is found in the perinuclear region. Its subcellular location is the nucleus. The protein resides in the cell membrane. In terms of biological role, may enhance ubiquitin ligase activity of RING-type zinc finger-containing E3 ubiquitin-protein ligases. Proposed to act through recruitment and/or stabilization of the Ubl-conjugating enzyme (E2) at the E3:substrate complex. The polypeptide is Melanoma-associated antigen E1 (Magee1) (Rattus norvegicus (Rat)).